The following is an 88-amino-acid chain: Sapecin-B (88 aa).

Residues 1 to 24 (MKFLTSLLLLFVVVMVSAVNLSMA) form the signal peptide. Positions 25–54 (KESANQLTERLQELDGAAIQEPAELNRHKR) are excised as a propeptide. Intrachain disulfides connect C57-C78, C64-C84, and C68-C86.

It belongs to the invertebrate defensin family. Type 1 subfamily. In terms of tissue distribution, hemocytes and fat body.

Its subcellular location is the secreted. Its function is as follows. Sapecins, which are potent bactericidal proteins, are produced in response to injury. Sapecin B is cytotoxic to Gram-positive bacteria. This is Sapecin-B from Sarcophaga peregrina (Flesh fly).